A 253-amino-acid chain; its full sequence is Cyclin-C1-2 (253 aa).

It belongs to the cyclin family. Cyclin C subfamily.

This chain is Cyclin-C1-2 (CYCC1-2), found in Arabidopsis thaliana (Mouse-ear cress).